Here is a 213-residue protein sequence, read N- to C-terminus: Protein GET1 (213 aa).

Residues 1-4 (MPSL) are Lumenal-facing. The helical transmembrane segment at 5–24 (LLVVFILQFLLHIINTVGAS) threads the bilayer. Residues 25–110 (TVNDLLWILY…AFTSAVSTLR (86 aa)) are Cytoplasmic-facing. A coiled-coil region spans residues 41-68 (TSSSAQKAQKLKKEIVQLKRELGATSAQ). A helical transmembrane segment spans residues 111 to 131 (WLGTQGLRFVLQFWFAKSPMF). Over 132–155 (WMPAGWLPFYVEWILSFPRAPLGS) the chain is Lumenal. Residues 156 to 172 (VSINVWGIACASMIALA) traverse the membrane as a helical segment. Residues 173–213 (AEGLAAVWVLATKRPTPIATEKKEAMAFAADQKSSGEKKEL) are Cytoplasmic-facing.

The protein belongs to the WRB/GET1 family. Interacts with GET3.

The protein localises to the endoplasmic reticulum membrane. Required for the post-translational delivery of tail-anchored (TA) proteins to the endoplasmic reticulum. Acts as a membrane receptor for soluble GET3, which recognizes and selectively binds the transmembrane domain of TA proteins in the cytosol. The polypeptide is Protein GET1 (Phaeosphaeria nodorum (strain SN15 / ATCC MYA-4574 / FGSC 10173) (Glume blotch fungus)).